Here is a 266-residue protein sequence, read N- to C-terminus: Signal peptidase I (266 aa).

Residues 1–20 (MQTDNTKSNTNKTAKQEWGS) lie on the Cytoplasmic side of the membrane. A helical transmembrane segment spans residues 21-41 (FVFVICIALLIRILIMEPFTV). Over 42–266 (PTGSMKATIL…IFRNLYNTDV (225 aa)) the chain is Periplasmic. Active-site residues include serine 45 and lysine 108.

It belongs to the peptidase S26 family.

It is found in the cell inner membrane. It carries out the reaction Cleavage of hydrophobic, N-terminal signal or leader sequences from secreted and periplasmic proteins.. This chain is Signal peptidase I (lepB), found in Rickettsia massiliae (strain Mtu5).